We begin with the raw amino-acid sequence, 133 residues long: Small ribosomal subunit protein uS8 (133 aa).

This sequence belongs to the universal ribosomal protein uS8 family. As to quaternary structure, part of the 30S ribosomal subunit. Contacts proteins S5 and S12.

Its function is as follows. One of the primary rRNA binding proteins, it binds directly to 16S rRNA central domain where it helps coordinate assembly of the platform of the 30S subunit. This Synechococcus sp. (strain RCC307) protein is Small ribosomal subunit protein uS8.